A 469-amino-acid chain; its full sequence is UDP-N-acetylmuramoylalanine--D-glutamate ligase (469 aa).

G121–T127 is an ATP binding site.

This sequence belongs to the MurCDEF family.

It localises to the cytoplasm. The catalysed reaction is UDP-N-acetyl-alpha-D-muramoyl-L-alanine + D-glutamate + ATP = UDP-N-acetyl-alpha-D-muramoyl-L-alanyl-D-glutamate + ADP + phosphate + H(+). Its pathway is cell wall biogenesis; peptidoglycan biosynthesis. Its function is as follows. Cell wall formation. Catalyzes the addition of glutamate to the nucleotide precursor UDP-N-acetylmuramoyl-L-alanine (UMA). The sequence is that of UDP-N-acetylmuramoylalanine--D-glutamate ligase from Rhodopseudomonas palustris (strain ATCC BAA-98 / CGA009).